A 505-amino-acid polypeptide reads, in one-letter code: MVSIRPDEISSILKQQITDYDQSVSVSNVGTVLQIGDGIARIYGLDQVMAGELLEFEDGTEGIALNLEDDNVGAVLMGEALGVQEGSNVKSTGKIASVPVGEAMQGRVVNPLGQPIDGKGEIPTSDTRLIEEMAPGIIKRRSVHEPMQTGITSIDAMIPVGRGQRELIIGDRQTGKSAIAIDTIINQKGQDVVCVYVAIGQKSASVANIVEVLRERGALDYTVVVSAGASEPAALQYLAPYTGAAIAEHFMYQGKATLVIYDDLTKQAQAYRQMSLLLKRPPGREAYPGDVFYLHSRLLERAAKLSDAMGGGSMTALPIIETQAGDVSAYIPTNVISITDGQIFLSADLFNSGLRPAINVGISVSRVGGAAQTKAIKKIAGTLKLELAQFDELAAFSQFASDLDEATQQQLERGKRLRELLKQPQFSPLNLAEQVAVVYAGVKGLIDEVPVEDVTKFATELREYLKLNKSEFIEEILKEKKLNDGLEATLKEVINEVKSSMLATV.

An ATP-binding site is contributed by 170-177; that stretch reads GDRQTGKS.

It belongs to the ATPase alpha/beta chains family. As to quaternary structure, F-type ATPases have 2 components, CF(1) - the catalytic core - and CF(0) - the membrane proton channel. CF(1) has five subunits: alpha(3), beta(3), gamma(1), delta(1), epsilon(1). CF(0) has four main subunits: a(1), b(1), b'(1) and c(9-12).

Its subcellular location is the cellular thylakoid membrane. The enzyme catalyses ATP + H2O + 4 H(+)(in) = ADP + phosphate + 5 H(+)(out). Produces ATP from ADP in the presence of a proton gradient across the membrane. The alpha chain is a regulatory subunit. The chain is ATP synthase subunit alpha from Prochlorococcus marinus (strain AS9601).